Consider the following 330-residue polypeptide: Aspartate--ammonia ligase (330 aa).

This sequence belongs to the class-II aminoacyl-tRNA synthetase family. AsnA subfamily.

The protein localises to the cytoplasm. The catalysed reaction is L-aspartate + NH4(+) + ATP = L-asparagine + AMP + diphosphate + H(+). The protein operates within amino-acid biosynthesis; L-asparagine biosynthesis; L-asparagine from L-aspartate (ammonia route): step 1/1. The chain is Aspartate--ammonia ligase from Mannheimia succiniciproducens (strain KCTC 0769BP / MBEL55E).